A 297-amino-acid chain; its full sequence is PIH1 domain-containing protein 1 (297 aa).

It belongs to the PIH1 family.

It localises to the nucleus. Its function is as follows. Involved in the assembly of C/D box small nucleolar ribonucleoprotein (snoRNP) particles. Recruits the SWI/SNF complex to the core promoter of rRNA genes and enhances pre-rRNA transcription. Mediates interaction of TELO2 with the R2TP complex which is necessary for the stability of MTOR and SMG1. Positively regulates the assembly and activity of the mTORC1 complex. This chain is PIH1 domain-containing protein 1 (pih1d1), found in Xenopus laevis (African clawed frog).